The following is a 213-amino-acid chain: Uridine kinase (213 aa).

15–22 (GASASGKS) provides a ligand contact to ATP.

It belongs to the uridine kinase family.

The protein resides in the cytoplasm. It catalyses the reaction uridine + ATP = UMP + ADP + H(+). It carries out the reaction cytidine + ATP = CMP + ADP + H(+). Its pathway is pyrimidine metabolism; CTP biosynthesis via salvage pathway; CTP from cytidine: step 1/3. It participates in pyrimidine metabolism; UMP biosynthesis via salvage pathway; UMP from uridine: step 1/1. This Sodalis glossinidius (strain morsitans) protein is Uridine kinase.